Here is an 833-residue protein sequence, read N- to C-terminus: DNA polymerase I, thermostable (833 aa).

Residues 173–267 enclose the 5'-3' exonuclease domain; that stretch reads VPPERWVDFR…FKALRRRTPD (95 aa). The segment at 412–833 is polymerase; it reads ERLFQNLFPR…GRDWLEAKQD (422 aa).

This sequence belongs to the DNA polymerase type-A family.

The enzyme catalyses DNA(n) + a 2'-deoxyribonucleoside 5'-triphosphate = DNA(n+1) + diphosphate. In terms of biological role, in addition to polymerase activity, this DNA polymerase exhibits 5'-3' exonuclease activity. Unlikely to have 3'-5' exonuclease activity due to absence of a 3'-5' exonuclease domain. This is DNA polymerase I, thermostable (polA) from Thermus filiformis.